Consider the following 69-residue polypeptide: Cold shock-like protein CspE (69 aa).

One can recognise a CSD domain in the interval 6–66; that stretch reads GNVKWFNESK…GAKGPSAANV (61 aa).

Its subcellular location is the cytoplasm. This Escherichia coli O6:H1 (strain CFT073 / ATCC 700928 / UPEC) protein is Cold shock-like protein CspE (cspE).